The chain runs to 539 residues: Putative serine/threonine-protein kinase L670 (539 aa).

The region spanning 1–115 (MSLFNNHPEL…ILKVFKFGLH (115 aa)) is the Cyclin N-terminal domain. A Protein kinase domain is found at 258 to 519 (MNVIEKLGIG…VLKIFSECFV (262 aa)). Residues 264 to 272 (LGIGSFGLV) and K285 each bind ATP. D375 serves as the catalytic Proton acceptor.

This sequence belongs to the protein kinase superfamily. Ser/Thr protein kinase family.

The catalysed reaction is L-seryl-[protein] + ATP = O-phospho-L-seryl-[protein] + ADP + H(+). It carries out the reaction L-threonyl-[protein] + ATP = O-phospho-L-threonyl-[protein] + ADP + H(+). This chain is Putative serine/threonine-protein kinase L670, found in Acanthamoeba polyphaga mimivirus (APMV).